The sequence spans 318 residues: Ornithine carbamoyltransferase (318 aa).

Carbamoyl phosphate contacts are provided by residues 63 to 66 (STRT), Gln90, Arg114, and 141 to 144 (HPCQ). Residues Asn172, Asp235, and 239-240 (SM) contribute to the L-ornithine site. Carbamoyl phosphate is bound by residues 275–276 (CL) and Arg303.

It belongs to the aspartate/ornithine carbamoyltransferase superfamily. OTCase family.

The protein resides in the cytoplasm. The enzyme catalyses carbamoyl phosphate + L-ornithine = L-citrulline + phosphate + H(+). It participates in amino-acid biosynthesis; L-arginine biosynthesis; L-arginine from L-ornithine and carbamoyl phosphate: step 1/3. Functionally, reversibly catalyzes the transfer of the carbamoyl group from carbamoyl phosphate (CP) to the N(epsilon) atom of ornithine (ORN) to produce L-citrulline. This is Ornithine carbamoyltransferase from Prochlorococcus marinus (strain MIT 9313).